Reading from the N-terminus, the 258-residue chain is ADP-dependent (S)-NAD(P)H-hydrate dehydratase (258 aa).

Positions 1 to 258 (MGRLQRTLSN…VIECIPKTIR (258 aa)) constitute a YjeF C-terminal domain. Residue Gly-201 coordinates AMP. (6S)-NADPHX is bound at residue Asp-202.

This sequence belongs to the NnrD/CARKD family. In terms of assembly, homotetramer. Mg(2+) serves as cofactor.

It catalyses the reaction (6S)-NADHX + ADP = AMP + phosphate + NADH + H(+). The catalysed reaction is (6S)-NADPHX + ADP = AMP + phosphate + NADPH + H(+). Catalyzes the dehydration of the S-form of NAD(P)HX at the expense of ADP, which is converted to AMP. Together with NAD(P)HX epimerase, which catalyzes the epimerization of the S- and R-forms, the enzyme allows the repair of both epimers of NAD(P)HX, a damaged form of NAD(P)H that is a result of enzymatic or heat-dependent hydration. The protein is ADP-dependent (S)-NAD(P)H-hydrate dehydratase of Natrialba magadii (strain ATCC 43099 / DSM 3394 / CCM 3739 / CIP 104546 / IAM 13178 / JCM 8861 / NBRC 102185 / NCIMB 2190 / MS3) (Natronobacterium magadii).